We begin with the raw amino-acid sequence, 480 residues long: Glutamate--tRNA ligase (480 aa).

The short motif at 9–19 (PSPTGNLHIGT) is the 'HIGH' region element. The 'KMSKS' region motif lies at 247 to 251 (KLSKR). Residue K250 participates in ATP binding.

This sequence belongs to the class-I aminoacyl-tRNA synthetase family. Glutamate--tRNA ligase type 1 subfamily. Monomer.

The protein resides in the cytoplasm. The catalysed reaction is tRNA(Glu) + L-glutamate + ATP = L-glutamyl-tRNA(Glu) + AMP + diphosphate. In terms of biological role, catalyzes the attachment of glutamate to tRNA(Glu) in a two-step reaction: glutamate is first activated by ATP to form Glu-AMP and then transferred to the acceptor end of tRNA(Glu). The polypeptide is Glutamate--tRNA ligase (Nostoc sp. (strain PCC 7120 / SAG 25.82 / UTEX 2576)).